The primary structure comprises 395 residues: Protochlorophyllide reductase B, chloroplastic (395 aa).

The N-terminal 59 residues, 1–59, are a transit peptide targeting the chloroplast; that stretch reads MALQAATSFLPSALSARKEGAAKDSAFFGVRLADGLKLDATSLGLRTKRVNTSSVAIRA.

It belongs to the short-chain dehydrogenases/reductases (SDR) family. POR subfamily.

The protein resides in the plastid. Its subcellular location is the chloroplast. It carries out the reaction chlorophyllide a + NADP(+) = protochlorophyllide a + NADPH + H(+). Its pathway is porphyrin-containing compound metabolism; chlorophyll biosynthesis. In terms of biological role, phototransformation of protochlorophyllide (Pchlide) to chlorophyllide (Chlide). This chain is Protochlorophyllide reductase B, chloroplastic (PORB), found in Hordeum vulgare (Barley).